A 541-amino-acid chain; its full sequence is Glucose-6-phosphate isomerase (541 aa).

Glu-346 acts as the Proton donor in catalysis. Catalysis depends on residues His-377 and Lys-506.

The protein belongs to the GPI family.

Its subcellular location is the cytoplasm. The catalysed reaction is alpha-D-glucose 6-phosphate = beta-D-fructose 6-phosphate. It participates in carbohydrate biosynthesis; gluconeogenesis. The protein operates within carbohydrate degradation; glycolysis; D-glyceraldehyde 3-phosphate and glycerone phosphate from D-glucose: step 2/4. Catalyzes the reversible isomerization of glucose-6-phosphate to fructose-6-phosphate. This chain is Glucose-6-phosphate isomerase, found in Sinorhizobium medicae (strain WSM419) (Ensifer medicae).